The primary structure comprises 288 residues: Zinc finger protein ZAT9 (288 aa).

The segment at 4-26 (YKCRVCFKSFVNGKALGGHMRSH) adopts a C2H2-type 1 zinc-finger fold. 3 disordered regions span residues 20–82 (GGHM…LTRK), 101–123 (SQLGYKPESDQEPPHSSASDTTT), and 189–210 (GGHRASHKKNRVSNNKTEQRSE). Residues 37-52 (PSQLSYETESDVSSSD) are compositionally biased toward polar residues. 2 consecutive C2H2-type zinc fingers follow at residues 173–195 (YKCETCGKVFKSYQALGGHRASH) and 224–246 (HECPICLRVFASGQALGGHKRSH).

The protein localises to the nucleus. Its function is as follows. Probable transcription factor that may be involved in stress responses. The polypeptide is Zinc finger protein ZAT9 (ZAT9) (Arabidopsis thaliana (Mouse-ear cress)).